The following is a 145-amino-acid chain: Hemoglobin subunit beta-3 (145 aa).

The 145-residue stretch at 1 to 145 (MLTAEEKAAV…VANALAHRYH (145 aa)) folds into the Globin domain. Thr-11 bears the Phosphothreonine mark. Lys-58 carries the N6-acetyllysine modification. His-62 serves as a coordination point for heme b. At Lys-81 the chain carries N6-acetyllysine. His-91 lines the heme b pocket. Cys-92 carries the post-translational modification S-nitrosocysteine.

The protein belongs to the globin family. In terms of assembly, heterotetramer of two alpha chains and two beta chains. In terms of tissue distribution, red blood cells.

In terms of biological role, involved in oxygen transport from the lung to the various peripheral tissues. The chain is Hemoglobin subunit beta-3 (HBB) from Odocoileus virginianus virginianus (Virginia white-tailed deer).